The primary structure comprises 647 residues: Golgi-associated RAB2B interactor protein 3 (647 aa).

Polar residues predominate over residues 188–202; sequence IPTADTSTETKSTLV. 4 disordered regions span residues 188-220, 267-296, 361-384, and 465-573; these read IPTADTSTETKSTLVSEIHGEGDRDSKFQTSQD, TAGAAGATGAAGATGAAGSARAAGGAGSAR, SKSPGSGQVATGLTGTASKDQERS, and RDGS…GFVS. Basic and acidic residues predominate over residues 205-214; the sequence is IHGEGDRDSK. Positions 361–378 are enriched in polar residues; sequence SKSPGSGQVATGLTGTAS. At serine 378 the chain carries Phosphoserine. A compositionally biased stretch (basic and acidic residues) spans 478–491; sequence TQKEKRERRESDRK. Positions 492–501 are enriched in basic residues; that stretch reads GSRKSSHHQR. A Bipartite nuclear localization signal motif is present at residues 494–511; the sequence is RKSSHHQRTGASRHSSSK. Positions 528 to 556 are enriched in basic and acidic residues; the sequence is KTREDKKEKGRGSLRDQRHSSSYRSESRT. 2 positions are modified to phosphoserine: serine 634 and serine 636.

The protein belongs to the GARIN family. As to quaternary structure, interacts (via N-terminus) with RAB2B (in GTP-bound form). Interacts with FRG1.

It is found in the golgi apparatus. The protein resides in the nucleus. It localises to the cajal body. In terms of biological role, may be involved in RNA biogenesis. The chain is Golgi-associated RAB2B interactor protein 3 (Garin3) from Rattus norvegicus (Rat).